The sequence spans 494 residues: UPF0371 protein SEQ_1471 (494 aa).

It belongs to the UPF0371 family.

The polypeptide is UPF0371 protein SEQ_1471 (Streptococcus equi subsp. equi (strain 4047)).